Consider the following 114-residue polypeptide: Ribulose bisphosphate carboxylase small subunit 2 (114 aa).

This sequence belongs to the RuBisCO small chain family. In terms of assembly, heterohexadecamer of 8 large and 8 small subunits. Forms a CsoS2-CsoS1-RuBisCO complex.

The protein localises to the carboxysome. RuBisCO catalyzes two reactions: the carboxylation of D-ribulose 1,5-bisphosphate, the primary event in carbon dioxide fixation, as well as the oxidative fragmentation of the pentose substrate. Both reactions occur simultaneously and in competition at the same active site. Although the small subunit is not catalytic it is essential for maximal activity. Its function is as follows. Replacing the endogenous type I ccbLS genes in H.neapolitanus with this carboxysomally targeted enzyme reconstitutes RuBisCO with about 25% of normal activity; the active enzyme is targeted to carboxysomes. The protein is Ribulose bisphosphate carboxylase small subunit 2 of Hydrogenovibrio crunogenus (strain DSM 25203 / XCL-2) (Thiomicrospira crunogena).